Here is a 1240-residue protein sequence, read N- to C-terminus: Ubiquitin carboxyl-terminal hydrolase 36 (1240 aa).

Disordered stretches follow at residues Ala-37–Asn-56 and Ser-100–Ala-144. Low complexity-rich tracts occupy residues Ser-47–Asn-56 and Asn-101–Gly-132. A USP domain is found at Thr-202 to Asp-512. The Nucleophile role is filled by Cys-211. The Proton acceptor role is filled by His-471. The segment at Ala-637–Val-705 is disordered. Positions Lys-639 to Lys-649 are enriched in polar residues. Residues Gln-650 to His-662 are compositionally biased toward low complexity. Residues Ser-668–Asn-680 are compositionally biased toward acidic residues. Thr-715 bears the Phosphothreonine mark. Disordered stretches follow at residues Tyr-723 to Thr-818, Tyr-831 to Leu-998, Asp-1076 to Ser-1163, and Arg-1198 to Ser-1240. Phosphoserine is present on residues Ser-725 and Ser-727. Over residues Gln-733–Gln-744 the composition is skewed to low complexity. Over residues Ser-759–Gln-769 the composition is skewed to acidic residues. The span at Asn-794–Lys-815 shows a compositional bias: low complexity. Positions Asp-843 to Ala-859 are enriched in acidic residues. Positions Thr-869–Ser-879 are enriched in low complexity. Residues Leu-880–Gly-890 show a composition bias toward polar residues. Position 895 is a phosphoserine (Ser-895). Thr-898 bears the Phosphothreonine mark. Ser-901 carries the phosphoserine modification. Positions Asp-918–Ala-941 are enriched in acidic residues. Over residues Leu-976–Arg-988 the composition is skewed to polar residues. The span at Asp-1076–Asn-1103 shows a compositional bias: low complexity. Residues Ala-1111–Asp-1120 show a composition bias toward basic and acidic residues. The segment covering Gln-1231–Ser-1240 has biased composition (low complexity).

It belongs to the peptidase C19 family. Interacts with atms/PAF1, but not with CycT.

Its subcellular location is the nucleus. It is found in the nucleolus. It carries out the reaction Thiol-dependent hydrolysis of ester, thioester, amide, peptide and isopeptide bonds formed by the C-terminal Gly of ubiquitin (a 76-residue protein attached to proteins as an intracellular targeting signal).. Functionally, required for maintaining multiple types of adult stem cells, including male and female germline, epithelial follicle cell and intestinal stem cells. May function as a transcriptional repressor by continually deubiquiting histone H2B at the promoters of genes critical for cellular differentiation, thereby preventing histone H3 'Lys-4' trimethylation (H3K4). Controls selective autophagy activation by ubiquitinated proteins. In Drosophila grimshawi (Hawaiian fruit fly), this protein is Ubiquitin carboxyl-terminal hydrolase 36 (Usp36).